A 400-amino-acid chain; its full sequence is Argininosuccinate synthase (400 aa).

8–16 contributes to the ATP binding site; it reads AYSGGLDTS. An L-citrulline-binding site is contributed by Y87. G117 contributes to the ATP binding site. Residues T119, N123, and D124 each contribute to the L-aspartate site. An L-citrulline-binding site is contributed by N123. Residues R127, S175, E260, and Y272 each contribute to the L-citrulline site.

This sequence belongs to the argininosuccinate synthase family. Type 1 subfamily. As to quaternary structure, homotetramer.

It is found in the cytoplasm. It catalyses the reaction L-citrulline + L-aspartate + ATP = 2-(N(omega)-L-arginino)succinate + AMP + diphosphate + H(+). It participates in amino-acid biosynthesis; L-arginine biosynthesis; L-arginine from L-ornithine and carbamoyl phosphate: step 2/3. The protein is Argininosuccinate synthase of Nocardia farcinica (strain IFM 10152).